The sequence spans 294 residues: F-box protein SKIP3 (294 aa).

Positions 21-67 (SSTLDSLPEGCISNIISFTSPEDACVAAAVSKIFESAVKSDIVWEKF) constitute an F-box domain.

Part of a SCF (SKP1-cullin-F-box) protein ligase complex. Interacts with SKP1A/ASK1.

The protein operates within protein modification; protein ubiquitination. The polypeptide is F-box protein SKIP3 (SKIP3) (Arabidopsis thaliana (Mouse-ear cress)).